We begin with the raw amino-acid sequence, 277 residues long: Phosphonates import ATP-binding protein PhnC 2 (277 aa).

Residues 5–253 (IHVQGLNKTF…FLNDLYGADA (249 aa)) form the ABC transporter domain. Residue 37-44 (GASGSGKS) coordinates ATP.

Belongs to the ABC transporter superfamily. Phosphonates importer (TC 3.A.1.9.1) family. As to quaternary structure, the complex is composed of two ATP-binding proteins (PhnC), two transmembrane proteins (PhnE) and a solute-binding protein (PhnD).

It localises to the cell inner membrane. The enzyme catalyses phosphonate(out) + ATP + H2O = phosphonate(in) + ADP + phosphate + H(+). Part of the ABC transporter complex PhnCDE involved in phosphonates import. Responsible for energy coupling to the transport system. The sequence is that of Phosphonates import ATP-binding protein PhnC 2 from Pseudomonas savastanoi pv. phaseolicola (strain 1448A / Race 6) (Pseudomonas syringae pv. phaseolicola (strain 1448A / Race 6)).